The chain runs to 1273 residues: Receptor-type tyrosine-protein phosphatase C (1273 aa).

Positions 1-23 (MYLWLKLLAFSLALLGPEVFVTG) are cleaved as a signal peptide. At 24–546 (QGTTDDGLDT…KPQSTSYNSK (523 aa)) the chain is on the extracellular side. Residues 45–192 (LPARTTEFTP…TEIATPQTKP (148 aa)) form a disordered region. Composition is skewed to polar residues over residues 50–77 (TEFTPPSISERGNGSSETTYLPGFSSTL), 84–111 (QPDSQTPSARGADTQTLSSQADLTTLTA), and 141–192 (RNST…QTKP). N62 carries N-linked (GlcNAc...) asparagine glycosylation. Residues N142, N153, N164, N178, N200, N245, N250, N271, N282, N327, N333, N371, N374, N471, and N502 are each glycosylated (N-linked (GlcNAc...) asparagine). Fibronectin type-III domains follow at residues 361–452 (PEML…TKAA) and 453–545 (RPGK…SYNS). A helical membrane pass occupies residues 547–567 (ALIIFLVFLIIVTSIALLVVL). Residues 568 to 1273 (YKIYDLRKKR…PMSPALTPSS (706 aa)) lie on the Cytoplasmic side of the membrane. 2 Tyrosine-protein phosphatase domains span residues 622-881 (FLAE…LVEY) and 913-1196 (LEAE…MASI). Y652 is subject to Phosphotyrosine. Residues D790, 822 to 828 (CSAGVGR), and Q866 contribute to the substrate site. The active-site Phosphocysteine intermediate is the C822. Phosphoserine occurs at positions 944, 963, 966, 970, 973, 974, and 978. The interval 960 to 984 (LEMSKESEAESDESSDEDSDSEETS) is disordered. A compositionally biased stretch (acidic residues) spans 968–981 (AESDESSDEDSDSE). The active-site Phosphocysteine intermediate is the C1137. 2 positions are modified to phosphoserine: S1209 and S1266. The interval 1219–1273 (VDGAKQDANCVQPADPLNKAQEDSKEVGASEPASGSEEPEHSANGPMSPALTPSS) is disordered.

Belongs to the protein-tyrosine phosphatase family. Receptor class 1/6 subfamily. As to quaternary structure, interacts with SKAP1. Interacts with DPP4; the interaction is enhanced in an interleukin-12-dependent manner in activated lymphocytes. Binds GANAB and PRKCSH. Interacts with CD53; this interaction stabilizes PTPRC on the membrane and is required for optimal phosphatase activity. Interacts with CLEC10A. Post-translationally, heavily N- and O-glycosylated. The cytoplasmic domain contains potential phosphorylation sites. As to expression, isoform 1 and isoform 2 are found in thymocyte and lymph node. Isoform 4 and isoform 3 are found in the lymph nod.

The protein localises to the cell membrane. It is found in the membrane raft. The protein resides in the synapse. The enzyme catalyses O-phospho-L-tyrosyl-[protein] + H2O = L-tyrosyl-[protein] + phosphate. In terms of biological role, protein tyrosine-protein phosphatase required for T-cell activation through the antigen receptor. Acts as a positive regulator of T-cell coactivation upon binding to DPP4. The first PTPase domain has enzymatic activity, while the second one seems to affect the substrate specificity of the first one. Upon T-cell activation, recruits and dephosphorylates SKAP1 and FYN. Dephosphorylates LYN, and thereby modulates LYN activity. Interacts with CLEC10A at antigen presenting cell-T cell contact; CLEC10A on immature dendritic cells recognizes Tn antigen-carrying PTPRC/CD45 receptor on effector T cells and modulates T cell activation threshold to limit autoreactivity. The protein is Receptor-type tyrosine-protein phosphatase C (Ptprc) of Rattus norvegicus (Rat).